A 283-amino-acid chain; its full sequence is Pantothenate synthetase (283 aa).

30-37 (MGNLHDGH) lines the ATP pocket. Residue His37 is the Proton donor of the active site. (R)-pantoate is bound at residue Gln61. Gln61 serves as a coordination point for beta-alanine. Position 149–152 (149–152 (GEKD)) interacts with ATP. Residue Gln155 coordinates (R)-pantoate. 186 to 189 (LSSR) provides a ligand contact to ATP.

Belongs to the pantothenate synthetase family. In terms of assembly, homodimer.

The protein resides in the cytoplasm. It carries out the reaction (R)-pantoate + beta-alanine + ATP = (R)-pantothenate + AMP + diphosphate + H(+). It functions in the pathway cofactor biosynthesis; (R)-pantothenate biosynthesis; (R)-pantothenate from (R)-pantoate and beta-alanine: step 1/1. In terms of biological role, catalyzes the condensation of pantoate with beta-alanine in an ATP-dependent reaction via a pantoyl-adenylate intermediate. This is Pantothenate synthetase from Escherichia coli O127:H6 (strain E2348/69 / EPEC).